The sequence spans 428 residues: AP2-like ethylene-responsive transcription factor At2g41710 (428 aa).

Residues 1 to 10 (MASVSSSDQG) show a composition bias toward polar residues. Residues 1–28 (MASVSSSDQGPKTEAGCSGGGGGESSET) are disordered. The segment at residues 70–136 (IYRGVTRHRW…WGPGTLINFP (67 aa)) is a DNA-binding region (AP2/ERF).

The protein belongs to the AP2/ERF transcription factor family. AP2 subfamily.

It localises to the nucleus. Probably acts as a transcriptional activator. Binds to the GCC-box pathogenesis-related promoter element. May be involved in the regulation of gene expression by stress factors and by components of stress signal transduction pathways. This is AP2-like ethylene-responsive transcription factor At2g41710 from Arabidopsis thaliana (Mouse-ear cress).